The primary structure comprises 351 residues: Protein-glutamate methylesterase/protein-glutamine glutaminase (351 aa).

Residues 6–123 enclose the Response regulatory domain; the sequence is RVLVVDDSPT…ARPFGDLADK (118 aa). Asp57 is modified (4-aspartylphosphate). A CheB-type methylesterase domain is found at 154–346; sequence YRAGRKVVAI…EEILKLTTAR (193 aa). Residues Ser166, His192, and Asp288 contribute to the active site.

It belongs to the CheB family. In terms of processing, phosphorylated by CheA. Phosphorylation of the N-terminal regulatory domain activates the methylesterase activity.

It localises to the cytoplasm. It catalyses the reaction [protein]-L-glutamate 5-O-methyl ester + H2O = L-glutamyl-[protein] + methanol + H(+). The enzyme catalyses L-glutaminyl-[protein] + H2O = L-glutamyl-[protein] + NH4(+). In terms of biological role, involved in chemotaxis. Part of a chemotaxis signal transduction system that modulates chemotaxis in response to various stimuli. Catalyzes the demethylation of specific methylglutamate residues introduced into the chemoreceptors (methyl-accepting chemotaxis proteins or MCP) by CheR. Also mediates the irreversible deamidation of specific glutamine residues to glutamic acid. The chain is Protein-glutamate methylesterase/protein-glutamine glutaminase from Agrobacterium fabrum (strain C58 / ATCC 33970) (Agrobacterium tumefaciens (strain C58)).